The following is a 400-amino-acid chain: Elongation factor Tu 2 (400 aa).

The tr-type G domain occupies 10 to 209 (KPHVNIGTIG…AVDEYIPTPQ (200 aa)). The interval 19-26 (GHVDHGKT) is G1. Residue 19-26 (GHVDHGKT) coordinates GTP. Thr26 is a Mg(2+) binding site. A G2 region spans residues 60–64 (GITIN). The G3 stretch occupies residues 81–84 (DCPG). GTP is bound by residues 81-85 (DCPGH) and 136-139 (NKAD). The tract at residues 136 to 139 (NKAD) is G4. Positions 174 to 176 (SAL) are G5.

Belongs to the TRAFAC class translation factor GTPase superfamily. Classic translation factor GTPase family. EF-Tu/EF-1A subfamily. Monomer.

The protein localises to the cytoplasm. The enzyme catalyses GTP + H2O = GDP + phosphate + H(+). Functionally, GTP hydrolase that promotes the GTP-dependent binding of aminoacyl-tRNA to the A-site of ribosomes during protein biosynthesis. The protein is Elongation factor Tu 2 of Pelotomaculum thermopropionicum (strain DSM 13744 / JCM 10971 / SI).